Reading from the N-terminus, the 151-residue chain is Ribosomal RNA large subunit methyltransferase H (151 aa).

S-adenosyl-L-methionine contacts are provided by residues Leu70, Gly99, and 118–123 (LSKLTF).

Belongs to the RNA methyltransferase RlmH family. As to quaternary structure, homodimer.

The protein resides in the cytoplasm. The catalysed reaction is pseudouridine(1915) in 23S rRNA + S-adenosyl-L-methionine = N(3)-methylpseudouridine(1915) in 23S rRNA + S-adenosyl-L-homocysteine + H(+). Its function is as follows. Specifically methylates the pseudouridine at position 1915 (m3Psi1915) in 23S rRNA. The chain is Ribosomal RNA large subunit methyltransferase H from Gloeobacter violaceus (strain ATCC 29082 / PCC 7421).